The primary structure comprises 203 residues: Histidine biosynthesis bifunctional protein HisIE (203 aa).

The phosphoribosyl-AMP cyclohydrolase stretch occupies residues 1–114 (MLTEQQRREL…FGDTAHQWLF (114 aa)). The interval 115–203 (LYQLEQLLAE…VIENLRKRHQ (89 aa)) is phosphoribosyl-ATP pyrophosphohydrolase.

In the N-terminal section; belongs to the PRA-CH family. This sequence in the C-terminal section; belongs to the PRA-PH family.

Its subcellular location is the cytoplasm. The catalysed reaction is 1-(5-phospho-beta-D-ribosyl)-ATP + H2O = 1-(5-phospho-beta-D-ribosyl)-5'-AMP + diphosphate + H(+). It catalyses the reaction 1-(5-phospho-beta-D-ribosyl)-5'-AMP + H2O = 1-(5-phospho-beta-D-ribosyl)-5-[(5-phospho-beta-D-ribosylamino)methylideneamino]imidazole-4-carboxamide. Its pathway is amino-acid biosynthesis; L-histidine biosynthesis; L-histidine from 5-phospho-alpha-D-ribose 1-diphosphate: step 2/9. It participates in amino-acid biosynthesis; L-histidine biosynthesis; L-histidine from 5-phospho-alpha-D-ribose 1-diphosphate: step 3/9. This is Histidine biosynthesis bifunctional protein HisIE (hisI) from Escherichia coli (strain K12).